The chain runs to 469 residues: UDP-N-acetylmuramate--L-alanine ligase (469 aa).

Glycine 112–threonine 118 contacts ATP.

It belongs to the MurCDEF family.

The protein localises to the cytoplasm. It carries out the reaction UDP-N-acetyl-alpha-D-muramate + L-alanine + ATP = UDP-N-acetyl-alpha-D-muramoyl-L-alanine + ADP + phosphate + H(+). The protein operates within cell wall biogenesis; peptidoglycan biosynthesis. In terms of biological role, cell wall formation. The protein is UDP-N-acetylmuramate--L-alanine ligase of Leptothrix cholodnii (strain ATCC 51168 / LMG 8142 / SP-6) (Leptothrix discophora (strain SP-6)).